Consider the following 149-residue polypeptide: Leghemoglobin (149 aa).

The region spanning Ala-3 to Gly-147 is the Globin domain. Position 31 is a nitrated tyrosine (Tyr-31). Residue Ser-46 coordinates heme b. Ser-46 carries the post-translational modification Phosphoserine. Residue His-62 coordinates O2. Residues Lys-65, His-94, and Lys-97 each contribute to the heme b site. A Nitrated tyrosine modification is found at Tyr-135.

Belongs to the plant globin family. In terms of assembly, monomer. Post-translationally, nitrated in effective nodules and particularly in hypoxic conditions; this mechanism may play a protective role in the symbiosis by buffering toxic peroxynitrite NO(2)(-). Nitration level decrease during nodule senescence. In terms of processing, phosphorylation at Ser-46 disrupts the molecular environment of its porphyrin ring oxygen binding pocket, thus leading to a reduced oxygen consumption and to the delivery of oxygen O(2) to symbiosomes. Root nodules.

It localises to the cytoplasm. Its subcellular location is the cytosol. The protein localises to the nucleus. Its function is as follows. Leghemoglobin that reversibly binds oxygen O(2) through a pentacoordinated heme iron. In root nodules, facilitates the diffusion of oxygen to the bacteroids while preventing the bacterial nitrogenase from being inactivated by buffering dioxygen, nitric oxide and carbon monoxide, and promoting the formation of reactive oxygen species (ROS, e.g. H(2)O(2)). This role is essential for symbiotic nitrogen fixation (SNF). The polypeptide is Leghemoglobin (Canavalia lineata (Beach bean)).